An 89-amino-acid polypeptide reads, in one-letter code: Gamma-bungarotoxin (89 aa).

The signal sequence occupies residues 1-21 (MKTLLLTLVVVTIVCLDLGYT). Disulfide bonds link Cys-24-Cys-45, Cys-27-Cys-32, Cys-38-Cys-66, Cys-70-Cys-81, and Cys-82-Cys-87. The Cell attachment site motif lies at 54-56 (RGD).

It belongs to the three-finger toxin family. Ancestral subfamily. Orphan group V sub-subfamily. In terms of tissue distribution, expressed by the venom gland.

It is found in the secreted. Functionally, exhibits M2 muscarinic acetylcholine receptor (CHRM2)-blocking activity, but has a weak binding activity toward nicotinic AChR. Moreover, it inhibits collagen-induced platelet aggregation. In Bungarus multicinctus (Many-banded krait), this protein is Gamma-bungarotoxin.